The sequence spans 412 residues: Zinc finger protein 260 (412 aa).

13 consecutive C2H2-type zinc fingers follow at residues 27–49 (YECN…KKMH), 55–77 (HECT…LRSH), 83–105 (YKCN…QKHH), 136–158 (YACK…EKIH), 164–186 (FECN…QNIH), 192–214 (FKCS…QRIH), 220–242 (YECK…QRSH), 248–270 (YTCK…EKIH), 276–298 (YKCN…HNIH), 304–326 (YECN…VRIH), 332–354 (YECK…MRSH), 360–382 (YGCN…MRIH), and 388–412 (YQCS…IHTH).

It belongs to the krueppel C2H2-type zinc-finger protein family. As to quaternary structure, binds DNA. Interacts with GATA4.

Its subcellular location is the nucleus. Functionally, transcription factor that acts as a cardiac regulator and an effector of alpha1-adrenergic signaling. Binds to PE response elements (PERE) present in the promoter of genes such as ANF/NPPA and acts as a direct transcriptional activator of NPPA. Also acts as a cofactor with GATA4, a key cardiac regulator. The protein is Zinc finger protein 260 (ZNF260) of Homo sapiens (Human).